The chain runs to 143 residues: Myocilin opposite strand protein (143 aa).

Positions 65–111 (MATRDETITKKSGEGEEMLPSMGMDHESPSKAHLMVPPAPPPSPADA) are disordered. A compositionally biased stretch (basic and acidic residues) spans 66–78 (ATRDETITKKSGE).

This Mus musculus (Mouse) protein is Myocilin opposite strand protein.